A 1034-amino-acid polypeptide reads, in one-letter code: Glycine dehydrogenase (decarboxylating), mitochondrial (1034 aa).

The transit peptide at 1 to 63 directs the protein to the mitochondrion; the sequence is MERARRLAML…LNGFGSQVRT (63 aa). Lys770 carries the N6-(pyridoxal phosphate)lysine modification.

This sequence belongs to the GcvP family. In terms of assembly, homodimer. The glycine cleavage system is composed of four proteins: P, T, L and H. Pyridoxal 5'-phosphate serves as cofactor.

The protein resides in the mitochondrion. The enzyme catalyses N(6)-[(R)-lipoyl]-L-lysyl-[glycine-cleavage complex H protein] + glycine + H(+) = N(6)-[(R)-S(8)-aminomethyldihydrolipoyl]-L-lysyl-[glycine-cleavage complex H protein] + CO2. In terms of biological role, the glycine cleavage system catalyzes the degradation of glycine. The P protein binds the alpha-amino group of glycine through its pyridoxal phosphate cofactor; CO(2) is released and the remaining methylamine moiety is then transferred to the lipoamide cofactor of the H protein. The polypeptide is Glycine dehydrogenase (decarboxylating), mitochondrial (GDCSP) (Flaveria anomala (Yellowtops)).